A 360-amino-acid polypeptide reads, in one-letter code: MPTILVSALEASSNIHLEELRHNLPKDYRFIGVFESKEALYSPREFSIMGFRDVIGRLGFLLKAHKEMVQLAKQADMVLLMDSSSFNIPLAKKIKKQDPHKKIMYYILPQVWAWKKWRAKSLEKYCDFLGAILPFEVGYYQKKAQYVGHPLLDEIKYYKKDIKGETLVFMPGSRKSEIAKMFPLFVKAAQILEQNEGFKRRVLVVPSFFKGLDLKALYGEDIKLFEISYDAHKSLFEAEFAFICSGTATLEAALIGTPFALAYRAKTMDFLIARMLVNLHYIGLANIFYNALNNETPGLGESQLHPELIQHFLSVEGLLKAYEEMDRERYFKESLRLREYLKHGSARKIAEEMAFLLNLT.

The protein belongs to the LpxB family.

The enzyme catalyses a lipid X + a UDP-2-N,3-O-bis[(3R)-3-hydroxyacyl]-alpha-D-glucosamine = a lipid A disaccharide + UDP + H(+). The protein operates within bacterial outer membrane biogenesis; LPS lipid A biosynthesis. In terms of biological role, condensation of UDP-2,3-diacylglucosamine and 2,3-diacylglucosamine-1-phosphate to form lipid A disaccharide, a precursor of lipid A, a phosphorylated glycolipid that anchors the lipopolysaccharide to the outer membrane of the cell. This chain is Lipid-A-disaccharide synthase (lpxB), found in Helicobacter pylori (strain J99 / ATCC 700824) (Campylobacter pylori J99).